The primary structure comprises 206 residues: uncharacterized protein (206 aa).

The segment at 147 to 206 (REEKAQKSKSKSRNQDERGSPLDERLGPKVSDLTLMERIFQVRRKPRKSRRDRRSRVSKR) is disordered. Basic and acidic residues predominate over residues 159–173 (RNQDERGSPLDERLG). Residues 187–206 (QVRRKPRKSRRDRRSRVSKR) are compositionally biased toward basic residues.

This is an uncharacterized protein from Schizosaccharomyces pombe (strain 972 / ATCC 24843) (Fission yeast).